A 699-amino-acid chain; its full sequence is Polyribonucleotide nucleotidyltransferase (699 aa).

Mg(2+) is bound by residues Asp484 and Asp490. Residues 551–610 (PRITTIQVKPDQVRTVIGPGGKNVRGIIEATGCAIDIEDDGRINIASADGDACKAAIKMI) enclose the KH domain. The region spanning 620–688 (GKLYMATVKK…RQGKIKLSRK (69 aa)) is the S1 motif domain.

The protein belongs to the polyribonucleotide nucleotidyltransferase family. It depends on Mg(2+) as a cofactor.

It localises to the cytoplasm. The enzyme catalyses RNA(n+1) + phosphate = RNA(n) + a ribonucleoside 5'-diphosphate. Functionally, involved in mRNA degradation. Catalyzes the phosphorolysis of single-stranded polyribonucleotides processively in the 3'- to 5'-direction. This Syntrophotalea carbinolica (strain DSM 2380 / NBRC 103641 / GraBd1) (Pelobacter carbinolicus) protein is Polyribonucleotide nucleotidyltransferase.